Reading from the N-terminus, the 453-residue chain is Exopolyphosphatase PRUNE1 (453 aa).

The residue at position 1 (M1) is an N-acetylmethionine. Positions 28, 30, 106, and 179 each coordinate Mn(2+). Residues 106–108 (DHH) carry the DHH motif motif. Residues 393-420 (SLISGLSQDEEDPPLPPTPMNSLVDECP) form an essential for homodimerization region. Positions 395 to 421 (ISGLSQDEEDPPLPPTPMNSLVDECPL) are disordered. The residue at position 399 (S399) is a Phosphoserine. Phosphothreonine is present on T410. S414 is subject to Phosphoserine.

This sequence belongs to the PPase class C family. Prune subfamily. In terms of assembly, homooligomer. Able to homodimerize via its C-terminal domain. Interacts with NME1. Interacts with GSK3; at focal adhesion complexes where paxillin and vinculin are colocalized. Interacts with alpha and beta tubulin. It depends on Mn(2+) as a cofactor. As to expression, ubiquitously expressed. Seems to be overexpressed in aggressive sarcoma subtypes, such as leiomyosarcomas and malignant fibrous histiocytomas (MFH) as well as in the less malignant liposarcomas.

It localises to the cytoplasm. The protein localises to the nucleus. It is found in the cell junction. Its subcellular location is the focal adhesion. It carries out the reaction diphosphate + H2O = 2 phosphate + H(+). Its activity is regulated as follows. Activated by magnesium ions and inhibited by manganese ions. Inhibited by dipyridamole, moderately sensitive to IBMX and inhibited by vinpocetine. Phosphodiesterase (PDE) that has higher activity toward cAMP than cGMP, as substrate. Plays a role in cell proliferation, migration and differentiation, and acts as a negative regulator of NME1. Plays a role in the regulation of neurogenesis. Involved in the regulation of microtubule polymerization. This is Exopolyphosphatase PRUNE1 from Homo sapiens (Human).